A 160-amino-acid chain; its full sequence is MSEPKQYVMTYEGVKKLEGELEYLKTVKRKEITEKIKVALGYGDLSENSEYDEAKNDQAFTEGKILQLENKLKNAVVVDESEIPKDIVSVGSKVKVKDYDFDEEVEYSIVGSAEADPMSFKISNESPVGKALVGKKIGDIVDVVVPDGISKFEILDIQRG.

The stretch at 49-75 (SEYDEAKNDQAFTEGKILQLENKLKNA) forms a coiled coil.

This sequence belongs to the GreA/GreB family.

Necessary for efficient RNA polymerase transcription elongation past template-encoded arresting sites. The arresting sites in DNA have the property of trapping a certain fraction of elongating RNA polymerases that pass through, resulting in locked ternary complexes. Cleavage of the nascent transcript by cleavage factors such as GreA or GreB allows the resumption of elongation from the new 3'terminus. GreA releases sequences of 2 to 3 nucleotides. In Clostridium botulinum (strain Alaska E43 / Type E3), this protein is Transcription elongation factor GreA.